Reading from the N-terminus, the 753-residue chain is Pumilio homolog 23 (753 aa).

The segment at 1–84 (MVSVGSKSLP…SEFEHQNQFV (84 aa)) is disordered. Basic and acidic residues-rich tracts occupy residues 23 to 38 (MGER…ERNK), 47 to 57 (GNRGFDVDSSK), and 73 to 84 (KHSEFEHQNQFV). Pumilio repeat units follow at residues 123 to 158 (ETRG…SFIR), 159 to 198 (NSAS…SVIE), 206 to 244 (KVIV…ELYG), 284 to 325 (GLLS…EIIP), 345 to 380 (NVAK…EMFN), 381 to 418 (KVFK…IMWE), 526 to 563 (SMKA…RLII), and 564 to 599 (KLRG…AIAS). In terms of domain architecture, PUM-HD spans 322-675 (EIIPLILRCN…DASEDAAQEI (354 aa)). 3 stretches are compositionally biased toward basic and acidic residues: residues 677-688 (VKNTRKEIDHHP), 699-712 (HAKD…GEKR), and 719-728 (KTSEATDKPK). Positions 677–753 (VKNTRKEIDH…KNRHSNKMRI (77 aa)) are disordered. Residues 744 to 753 (KNRHSNKMRI) are compositionally biased toward basic residues.

It localises to the nucleus. The protein localises to the nucleolus. In terms of biological role, sequence-specific RNA-binding protein that regulates translation and mRNA stability by binding the 3'-UTR of target mRNAs. The polypeptide is Pumilio homolog 23 (APUM23) (Arabidopsis thaliana (Mouse-ear cress)).